A 249-amino-acid polypeptide reads, in one-letter code: ATP-dependent Clp protease proteolytic subunit (249 aa).

The active-site Nucleophile is the S107. H132 is a catalytic residue. The disordered stretch occupies residues 212-249; the sequence is ESASQDNSLDPDAPDESASQDNSLDPDAPDETRPPKLR.

It belongs to the peptidase S14 family. In terms of assembly, component of the chloroplastic Clp protease core complex.

It localises to the plastid. Its subcellular location is the chloroplast stroma. The enzyme catalyses Hydrolysis of proteins to small peptides in the presence of ATP and magnesium. alpha-casein is the usual test substrate. In the absence of ATP, only oligopeptides shorter than five residues are hydrolyzed (such as succinyl-Leu-Tyr-|-NHMec, and Leu-Tyr-Leu-|-Tyr-Trp, in which cleavage of the -Tyr-|-Leu- and -Tyr-|-Trp bonds also occurs).. Cleaves peptides in various proteins in a process that requires ATP hydrolysis. Has a chymotrypsin-like activity. Plays a major role in the degradation of misfolded proteins. The polypeptide is ATP-dependent Clp protease proteolytic subunit (Oenothera elata subsp. hookeri (Hooker's evening primrose)).